We begin with the raw amino-acid sequence, 245 residues long: Carboxy-S-adenosyl-L-methionine synthase (245 aa).

S-adenosyl-L-methionine-binding positions include Tyr-42, 67–69 (GCS), 92–93 (DN), 120–121 (DI), Asn-135, and Arg-202.

It belongs to the class I-like SAM-binding methyltransferase superfamily. Cx-SAM synthase family. As to quaternary structure, homodimer.

The enzyme catalyses prephenate + S-adenosyl-L-methionine = carboxy-S-adenosyl-L-methionine + 3-phenylpyruvate + H2O. Its function is as follows. Catalyzes the conversion of S-adenosyl-L-methionine (SAM) to carboxy-S-adenosyl-L-methionine (Cx-SAM). The chain is Carboxy-S-adenosyl-L-methionine synthase from Vibrio vulnificus (strain CMCP6).